A 486-amino-acid polypeptide reads, in one-letter code: Probable glucan endo-1,3-beta-glucosidase eglC (486 aa).

An N-terminal signal peptide occupies residues 1 to 18 (MQLTQLLALALSLATSEA). N-linked (GlcNAc...) asparagine glycosylation is present at N84. E128 serves as the catalytic Proton donor. An N-linked (GlcNAc...) asparagine glycan is attached at N183. E239 serves as the catalytic Nucleophile. N-linked (GlcNAc...) asparagine glycans are attached at residues N315, N386, N396, and N404. The interval 330–458 (AAAGGVAGGS…SSGAASPSST (129 aa)) is disordered. Low complexity-rich tracts occupy residues 341 to 404 (GSAS…HGSN) and 413 to 424 (SVSNVSPSKSSS). A compositionally biased stretch (polar residues) spans 430–442 (AATSMGASPSSVG). Over residues 445-458 (GPSKSSGAASPSST) the composition is skewed to low complexity. G463 carries GPI-anchor amidated glycine lipidation. Positions 464–486 (AATSVSAPVVHVVLLALMMVIAA) are cleaved as a propeptide — removed in mature form.

This sequence belongs to the glycosyl hydrolase 17 family. Post-translationally, the GPI-anchor is attached to the protein in the endoplasmic reticulum and serves to target the protein to the cell surface. There, the glucosamine-inositol phospholipid moiety is cleaved off and the GPI-modified mannoprotein is covalently attached via its lipidless GPI glycan remnant to the 1,6-beta-glucan of the outer cell wall layer.

It localises to the cell membrane. It is found in the secreted. The protein localises to the cell wall. The enzyme catalyses Hydrolysis of (1-&gt;3)-beta-D-glucosidic linkages in (1-&gt;3)-beta-D-glucans.. Functionally, glucanases play a role in cell expansion during growth, in cell-cell fusion during mating, and in spore release during sporulation. This enzyme may be involved in beta-glucan degradation and also function biosynthetically as a transglycosylase. This Aspergillus terreus (strain NIH 2624 / FGSC A1156) protein is Probable glucan endo-1,3-beta-glucosidase eglC (eglC).